A 258-amino-acid polypeptide reads, in one-letter code: MNKLDLNLKEVHNELVEFLRENFKKAGFSKAVLGLSGGIDSALVAYLLRDALGKENVLAIMMPYKSSNPDSLNHAKLVVEDLKINSKTIEITDMIDAYFKNEKEATSLRMGNKMARERMSILFDYSSKENALVVGTSNKTEIYLGYSTQFGDAACALNPIGDLYKTNIWDLSRYLKIPNELIEKKPSADLWEGQTDEQEMGLTYKEADQVMYRLLEENKTVEEVLAEGFNKDLVDNIVRRMNRSEYKRRMPLIAKIKR.

34-41 (GLSGGIDS) contributes to the ATP binding site. D40 provides a ligand contact to Mg(2+). R116 is a binding site for deamido-NAD(+). T136 is a binding site for ATP. E141 contacts Mg(2+). The ATP site is built by K165 and S187.

The protein belongs to the NAD synthetase family. As to quaternary structure, homodimer.

The catalysed reaction is deamido-NAD(+) + NH4(+) + ATP = AMP + diphosphate + NAD(+) + H(+). It participates in cofactor biosynthesis; NAD(+) biosynthesis; NAD(+) from deamido-NAD(+) (ammonia route): step 1/1. In terms of biological role, catalyzes the ATP-dependent amidation of deamido-NAD to form NAD. Uses ammonia as a nitrogen source. The polypeptide is NH(3)-dependent NAD(+) synthetase (Fusobacterium nucleatum subsp. nucleatum (strain ATCC 25586 / DSM 15643 / BCRC 10681 / CIP 101130 / JCM 8532 / KCTC 2640 / LMG 13131 / VPI 4355)).